The following is a 132-amino-acid chain: Small ribosomal subunit protein uS8 (132 aa).

The protein belongs to the universal ribosomal protein uS8 family. Part of the 30S ribosomal subunit. Contacts proteins S5 and S12.

In terms of biological role, one of the primary rRNA binding proteins, it binds directly to 16S rRNA central domain where it helps coordinate assembly of the platform of the 30S subunit. The chain is Small ribosomal subunit protein uS8 from Roseiflexus castenholzii (strain DSM 13941 / HLO8).